A 414-amino-acid chain; its full sequence is uncharacterized protein (414 aa).

A disordered region spans residues 204–230 (LVGTPAPGPNGSNSDGDSERASQDVRD). Basic and acidic residues predominate over residues 220 to 230 (DSERASQDVRD).

This sequence belongs to the CdaR family.

This is an uncharacterized protein from Mycobacterium tuberculosis (strain CDC 1551 / Oshkosh).